Here is an 802-residue protein sequence, read N- to C-terminus: Elongation factor G, mitochondrial (802 aa).

The transit peptide at 1–24 directs the protein to the mitochondrion; the sequence is MRYPSLARLPRRALSGLARAPVRL. A tr-type G domain is found at 100-387; that stretch reads SRVRNIGIAA…GVIDYLPNPS (288 aa). GTP contacts are provided by residues 109-116, 185-189, and 239-242; these read AHIDSGKT, DTPGH, and NKMD.

It belongs to the TRAFAC class translation factor GTPase superfamily. Classic translation factor GTPase family. EF-G/EF-2 subfamily.

Its subcellular location is the mitochondrion. It functions in the pathway protein biosynthesis; polypeptide chain elongation. Functionally, mitochondrial GTPase that catalyzes the GTP-dependent ribosomal translocation step during translation elongation. During this step, the ribosome changes from the pre-translocational (PRE) to the post-translocational (POST) state as the newly formed A-site-bound peptidyl-tRNA and P-site-bound deacylated tRNA move to the P and E sites, respectively. Catalyzes the coordinated movement of the two tRNA molecules, the mRNA and conformational changes in the ribosome. This Aspergillus terreus (strain NIH 2624 / FGSC A1156) protein is Elongation factor G, mitochondrial (mef1).